A 461-amino-acid chain; its full sequence is GTPase Der (461 aa).

EngA-type G domains are found at residues 25-188 (PVVA…PNVA) and 198-371 (RRVA…ASWD). Residues 31–38 (GRPNVGKS), 78–82 (DTGGW), 140–143 (NKVD), 204–211 (GKPNVGKS), 251–255 (DTAGL), and 316–319 (NKWD) each bind GTP. Residues 372–454 (TRIATGPLNI…PIRINVRVRE (83 aa)) form the KH-like domain.

The protein belongs to the TRAFAC class TrmE-Era-EngA-EngB-Septin-like GTPase superfamily. EngA (Der) GTPase family. Associates with the 50S ribosomal subunit.

In terms of biological role, GTPase that plays an essential role in the late steps of ribosome biogenesis. The chain is GTPase Der from Mycobacterium leprae (strain TN).